The following is a 320-amino-acid chain: GTP 3',8-cyclase (320 aa).

The region spanning 4-226 (TFQRSINYMR…PIITDATSPA (223 aa)) is the Radical SAM core domain. Arg-13 is a GTP binding site. 2 residues coordinate [4Fe-4S] cluster: Cys-20 and Cys-24. Tyr-26 provides a ligand contact to S-adenosyl-L-methionine. Cys-27 contributes to the [4Fe-4S] cluster binding site. Arg-63 provides a ligand contact to GTP. Gly-67 contacts S-adenosyl-L-methionine. Residue Thr-94 coordinates GTP. Ser-118 provides a ligand contact to S-adenosyl-L-methionine. Lys-155 is a binding site for GTP. Met-189 contributes to the S-adenosyl-L-methionine binding site. [4Fe-4S] cluster-binding residues include Cys-249 and Cys-252. Residue 254-256 (RIR) participates in GTP binding. Cys-266 lines the [4Fe-4S] cluster pocket.

Belongs to the radical SAM superfamily. MoaA family. In terms of assembly, monomer and homodimer. Requires [4Fe-4S] cluster as cofactor.

It catalyses the reaction GTP + AH2 + S-adenosyl-L-methionine = (8S)-3',8-cyclo-7,8-dihydroguanosine 5'-triphosphate + 5'-deoxyadenosine + L-methionine + A + H(+). The protein operates within cofactor biosynthesis; molybdopterin biosynthesis. In terms of biological role, catalyzes the cyclization of GTP to (8S)-3',8-cyclo-7,8-dihydroguanosine 5'-triphosphate. This chain is GTP 3',8-cyclase, found in Alkaliphilus metalliredigens (strain QYMF).